Consider the following 235-residue polypeptide: Small ribosomal subunit protein mS23 (235 aa).

The segment at 51–71 (PYPIQHTEPKDRGRAAQRPRN) is disordered.

It belongs to the mitochondrion-specific ribosomal protein mS23 family. In terms of assembly, component of the mitochondrial small ribosomal subunit.

Its subcellular location is the mitochondrion. The sequence is that of Small ribosomal subunit protein mS23 (RSM25) from Chaetomium globosum (strain ATCC 6205 / CBS 148.51 / DSM 1962 / NBRC 6347 / NRRL 1970) (Soil fungus).